The primary structure comprises 978 residues: Receptor like protein 21 (978 aa).

An N-terminal signal peptide occupies residues 1–27 (MLLAMEGKLFLCQYLIWVMLLLGQLHG). The Extracellular segment spans residues 28–930 (CTSCIEKERE…EEDDKAAIDM (903 aa)). N-linked (GlcNAc...) asparagine glycans are attached at residues N64, N79, N102, N116, and N155. 28 LRR repeats span residues 141–167 (LRNLKIMDLSTNYFNYSTFPFLNAATS), 169–189 (TTLILTYNEMDGPFPIKGLKD), 190–213 (LTNLELLDLRANKLNGSMQELIHL), 214–237 (KKLKALDLSSNKFSSSMELQELQN), 238–262 (LINLEVLGLAQNHVDGPIPIEVFCK), 264–287 (KNLRDLDLKGNHFVGQIPLCLGSL), 288–310 (KKLRVLDLSSNQLSGDLPSSFSS), 312–335 (ESLEYLSLSDNNFDGSFSLNPLTN), 337–361 (TNLKLFKLSSRSHTIQVKMESTWQP), 362–385 (NFQLSVVVLRFCSLEKIPSFLLYQ), 386–409 (KKLRLVDLSSNNLSGNIPTWLLTN), 410–432 (NPELEVLQLQNNSFTIFPIPTMV), 433–455 (HNLQIFDFSANNIGKFPDKMDHA), 457–480 (PNLVRLNGSNNGFQGYFPTSIGEM), 481–504 (KNISFLDLSYNNFSGKLPRSFVTG), 506–529 (VSIMFLKLSHNKFSGRFLPRETNF), 530–553 (PSLDVLRMDNNLFTGNIGGGLSNS), 554–577 (TMLRILDMSNNGLSGAIPRWLFEF), 579–601 (YLDYVLISNNFLEGTIPPSLLGM), 602–625 (PFLSFLDLSGNQFSGALPSHVDSE), 627–646 (GIYMFLHNNNFTGPIPDTLL), 647–671 (KSVQILDLRNNKLSGSIPQFDDTQS), 673–693 (NILLLKGNNLTGSIPRELCDL), 694–716 (SNVRLLDLSDNKLNGVIPSCLSN), 788–811 (LRLMYGMDLSNNELSGVIPTELGD), 812–835 (LLKLRTLNLSHNSLLGSIPSSFSK), 837–859 (IDVESLDLSHNMLQGSIPQLLSS), and 860–885 (LTSLAVFDVSSNNLSGIIPQGRQFNT). N204 is a glycosylation site (N-linked (GlcNAc...) asparagine). N335 carries N-linked (GlcNAc...) asparagine glycosylation. 2 N-linked (GlcNAc...) asparagine glycosylation sites follow: N397 and N420. Residues N463, N482, and N492 are each glycosylated (N-linked (GlcNAc...) asparagine). The N-linked (GlcNAc...) asparagine glycan is linked to N552. Residue N636 is glycosylated (N-linked (GlcNAc...) asparagine). 2 N-linked (GlcNAc...) asparagine glycosylation sites follow: N681 and N716. N-linked (GlcNAc...) asparagine glycosylation occurs at N819. An N-linked (GlcNAc...) asparagine glycan is attached at N872. The interval 902-922 (TSRSCETNKSPEEADNGQEEE) is disordered. The chain crosses the membrane as a helical span at residues 931 to 951 (MVFYFSTASIYVTALIGVLVL). Over 952–978 (MCFDCPWRRAWLRIVDAFIASAKHVLP) the chain is Cytoplasmic.

The protein belongs to the RLP family.

The protein resides in the cell membrane. The protein is Receptor like protein 21 of Arabidopsis thaliana (Mouse-ear cress).